We begin with the raw amino-acid sequence, 249 residues long: Mediator of RNA polymerase II transcription subunit 19 (249 aa).

2 disordered regions span residues 1-68 and 178-249; these read MEGF…SSRR and QPPK…SGLR. A compositionally biased stretch (low complexity) spans 9–18; it reads AASEPSSIPS. Residues 45-56 are compositionally biased toward pro residues; sequence VPGPPLPIPPPL. Composition is skewed to basic residues over residues 179 to 190 and 221 to 233; these read PPKKKNKKHKQS and RRKK…KKSR.

This sequence belongs to the Mediator complex subunit 19 family. In terms of assembly, component of the Mediator complex.

The protein localises to the nucleus. Component of the Mediator complex, a coactivator involved in the regulated transcription of nearly all RNA polymerase II-dependent genes. Mediator functions as a bridge to convey information from gene-specific regulatory proteins to the basal RNA polymerase II transcription machinery. Mediator is recruited to promoters by direct interactions with regulatory proteins and serves as a scaffold for the assembly of a functional preinitiation complex with RNA polymerase II and the general transcription factors. The protein is Mediator of RNA polymerase II transcription subunit 19 (med19) of Xenopus tropicalis (Western clawed frog).